The primary structure comprises 417 residues: Serine hydroxymethyltransferase (417 aa).

Residues L120 and 124-126 (GHL) contribute to the (6S)-5,6,7,8-tetrahydrofolate site. K229 is modified (N6-(pyridoxal phosphate)lysine). 354 to 356 (SPF) contacts (6S)-5,6,7,8-tetrahydrofolate.

Belongs to the SHMT family. In terms of assembly, homodimer. The cofactor is pyridoxal 5'-phosphate.

The protein localises to the cytoplasm. The catalysed reaction is (6R)-5,10-methylene-5,6,7,8-tetrahydrofolate + glycine + H2O = (6S)-5,6,7,8-tetrahydrofolate + L-serine. It participates in one-carbon metabolism; tetrahydrofolate interconversion. It functions in the pathway amino-acid biosynthesis; glycine biosynthesis; glycine from L-serine: step 1/1. Functionally, catalyzes the reversible interconversion of serine and glycine with tetrahydrofolate (THF) serving as the one-carbon carrier. This reaction serves as the major source of one-carbon groups required for the biosynthesis of purines, thymidylate, methionine, and other important biomolecules. Also exhibits THF-independent aldolase activity toward beta-hydroxyamino acids, producing glycine and aldehydes, via a retro-aldol mechanism. This is Serine hydroxymethyltransferase from Acinetobacter baumannii (strain AB307-0294).